A 367-amino-acid chain; its full sequence is tRNA 2-selenouridine synthase (367 aa).

One can recognise a Rhodanese domain in the interval 14–137 (FLNDVPLMDV…LRRFLIDSLE (124 aa)). Catalysis depends on cysteine 97, which acts as the S-selanylcysteine intermediate.

Belongs to the SelU family. In terms of assembly, monomer.

It carries out the reaction 5-methylaminomethyl-2-thiouridine(34) in tRNA + selenophosphate + (2E)-geranyl diphosphate + H2O + H(+) = 5-methylaminomethyl-2-selenouridine(34) in tRNA + (2E)-thiogeraniol + phosphate + diphosphate. It catalyses the reaction 5-methylaminomethyl-2-thiouridine(34) in tRNA + (2E)-geranyl diphosphate = 5-methylaminomethyl-S-(2E)-geranyl-thiouridine(34) in tRNA + diphosphate. The enzyme catalyses 5-methylaminomethyl-S-(2E)-geranyl-thiouridine(34) in tRNA + selenophosphate + H(+) = 5-methylaminomethyl-2-(Se-phospho)selenouridine(34) in tRNA + (2E)-thiogeraniol. The catalysed reaction is 5-methylaminomethyl-2-(Se-phospho)selenouridine(34) in tRNA + H2O = 5-methylaminomethyl-2-selenouridine(34) in tRNA + phosphate. In terms of biological role, involved in the post-transcriptional modification of the uridine at the wobble position (U34) of tRNA(Lys), tRNA(Glu) and tRNA(Gln). Catalyzes the conversion of 2-thiouridine (S2U-RNA) to 2-selenouridine (Se2U-RNA). Acts in a two-step process involving geranylation of 2-thiouridine (S2U) to S-geranyl-2-thiouridine (geS2U) and subsequent selenation of the latter derivative to 2-selenouridine (Se2U) in the tRNA chain. This chain is tRNA 2-selenouridine synthase, found in Marinobacter nauticus (strain ATCC 700491 / DSM 11845 / VT8) (Marinobacter aquaeolei).